The primary structure comprises 433 residues: Inositol hexakisphosphate kinase 1 (433 aa).

A disordered region spans residues 100–160; that stretch reads ETVEQDDTPE…SPKVELHSHS (61 aa). Positions 113–123 are enriched in basic residues; it reads PRRKHSRRSLH. Positions 139–149 are enriched in polar residues; that stretch reads SFETSESSQET. Residues 150–160 are compositionally biased toward basic and acidic residues; sequence KSPKVELHSHS. The residue at position 151 (S151) is a Phosphoserine. 220–228 lines the substrate pocket; the sequence is PCVLDLKMG. Positions 362–383 are disordered; the sequence is PLCGPSTSPSNTSLEAGPSSPP. Polar residues predominate over residues 366–375; the sequence is PSTSPSNTSL.

The protein belongs to the inositol phosphokinase (IPK) family.

Its subcellular location is the cytoplasm. It localises to the nucleus. The enzyme catalyses 1D-myo-inositol hexakisphosphate + ATP = 5-diphospho-1D-myo-inositol 1,2,3,4,6-pentakisphosphate + ADP. The catalysed reaction is 1-diphospho-1D-myo-inositol 2,3,4,5,6-pentakisphosphate + ATP + H(+) = 1,5-bis(diphospho)-1D-myo-inositol 2,3,4,6-tetrakisphosphate + ADP. In terms of biological role, converts inositol hexakisphosphate (InsP6) to diphosphoinositol pentakisphosphate (InsP7/PP-InsP5). Converts 1,3,4,5,6-pentakisphosphate (InsP5) to PP-InsP4. This chain is Inositol hexakisphosphate kinase 1 (Ip6k1), found in Rattus norvegicus (Rat).